The primary structure comprises 381 residues: N-acetyl-alpha-D-glucosaminyl L-malate synthase (381 aa).

(S)-malate contacts are provided by Ser-16, Tyr-94, and Thr-122. Asn-206, Gln-262, and Glu-290 together coordinate UDP.

The protein belongs to the glycosyltransferase group 1 family. Glycosyltransferase 4 subfamily. Dimer of tetramers.

The catalysed reaction is (S)-malate + UDP-N-acetyl-alpha-D-glucosamine = (S)-malyl N-acetyl-alpha-D-glucosaminide + UDP + H(+). Involved in bacillithiol (BSH) biosynthesis. Catalyzes the first step of the pathway, the formation of N-acetylglucosaminylmalate (GlcNAc-Mal) from UDP-N-acetylglucosamine (UDP-GlcNAc) and L-malate. The chain is N-acetyl-alpha-D-glucosaminyl L-malate synthase from Bacillus anthracis.